The primary structure comprises 394 residues: Transcriptional regulator Myc-1 (394 aa).

T58 is a glycosylation site (O-linked (GlcNAc) threonine). Residues 76 to 84 carry the 9aaTAD motif; sequence EMVSEFLGD. Disordered stretches follow at residues 177 to 247 and 283 to 318; these read SGKS…SRYP and EASS…HNVL. A compositionally biased stretch (acidic residues) spans 205 to 226; that stretch reads DSEEEEEEEEEEEEEEEEEEID. Basic and acidic residues predominate over residues 229–238; that stretch reads TVEKRQKKNE. Residues 310-362 form the bHLH domain; it reads DKRRTHNVLERQRRNELKLSFFALRDEIPDVANNEKAAKVVILKKATECIHSM. A leucine-zipper region spans residues 369–390; the sequence is LLSIKEQLRRKSEQLKHRLQLL.

In terms of assembly, efficient DNA binding requires dimerization with another bHLH protein. Binds DNA as a heterodimer with MAX.

It is found in the nucleus. Functionally, transcription factor that binds DNA in a non-specific manner, yet also specifically recognizes the core sequence 5'-CAC[GA]TG-3'. Activates the transcription of growth-related genes. This chain is Transcriptional regulator Myc-1 (myca), found in Cyprinus carpio (Common carp).